The following is a 149-amino-acid chain: MAELTETSPETPETTEAIRAVEAFLNALQNEDFDTVDAALGDDLVYENVGFSRIRGGRRTATLLRRMQGRVGFEVKIHRIGADGAAVLTERTDALIIGPLRVQFWVCGVFEVDDGRITLWRDYFDVYDMFKGLLRGLVALVVPSLKATL.

Residue aspartate 93 is the Proton donor of the active site. Aspartate 122 serves as the catalytic Proton acceptor.

This sequence belongs to the limonene-1,2-epoxide hydrolase family. Homodimer. Is also present as monomer in solution.

The catalysed reaction is an epoxide + H2O = an ethanediol. It catalyses the reaction 5,6alpha-epoxy-5alpha-cholestan-3beta-ol + H2O = 5alpha-cholestane-3beta,5,6beta-triol. The enzyme catalyses 5,6beta-epoxy-5beta-cholestan-3beta-ol + H2O = 5alpha-cholestane-3beta,5,6beta-triol. Is inhibited by the anti-epileptic drug valpromide (Ki value of about 100 uM). In terms of biological role, epoxide hydrolase capable of hydrolyzing long or bulky lipophilic epoxides such as 9,10-epoxystearic acid and cholesterol 5,6-oxide in vitro. The physiological substrates have yet to be identified, but could be fatty acid or steroid derivatives. In Mycobacterium tuberculosis (strain ATCC 25618 / H37Rv), this protein is Epoxide hydrolase EphG (ephG).